The primary structure comprises 633 residues: MESGPKMLAPICLVENNNEQLLVNQQAIQILEKISQPVVVVAIVGLYRTGKSYLMNHLAGQNHGFPLGSTVQSETKGIWMWCVPHPSKPNHTLVLLDTEGLGDVEKGDPKNDSWIFALAVLLCSTFIYNSMSTINHQALEQLHYVTELTELIKAKSSPRPDGVDDSTEFVSFFPDFIWTVRDFTLELKLNGHPITEDEYLENALKLIQGNNPRVQTSNLPRECIRRFFPKRKCFIFDRPTNDKDLLANIEKVSEKQLDPKFQEQTNIFSSYIFTHARTKTLREGIIVTGNRLGTLAVTYVEAVNSGAVPCLENAVITLAQRENSAAVQRAADYYSQQMAQRVKFPTDTLQELLDMHAACEREAIAIFMEHSFKDENQEFQKKFMETTMNKKGDFLLQNEESSVQYCQAKLNELSKGLMESISAGSFSVPGGHKLYMETKERIEQDYWQVPRKGVKAKEVFQRFLESQVVIEESILQSDKALTDREKAVAVDRAKKEAAEKEQELLKQKLQEQQQQMEAQDKSLKENIAQLKQKLQMEREQLLREQIMMLEHTQKVQNDWLHEGFKKKYEEMNAEISQFKRMIDITKNDDTPWIARTLDKLADELTAVLSAPAKLIGHGVKGVSSLFKKHKLPF.

Residues 1–310 (MESGPKMLAP…EAVNSGAVPC (310 aa)) form a GTPase domain (Globular) region. A GB1/RHD3-type G domain is found at 35 to 277 (SQPVVVVAIV…FSSYIFTHAR (243 aa)). Residues 45–52 (GLYRTGKS), 67–69 (LGS), and 97–101 (DTEGL) each bind GTP.

Belongs to the TRAFAC class dynamin-like GTPase superfamily. GB1/RHD3 GTPase family. GB1 subfamily.

Its subcellular location is the cytoplasmic vesicle. It catalyses the reaction GTP + H2O = GDP + phosphate + H(+). In terms of biological role, interferon (IFN)-inducible GTPase that plays important roles in innate immunity against a diverse range of bacterial, viral and protozoan pathogens, such as bacterial pathogens Listeria monocytogenes and Mycobacterium bovis BCG as well as the protozoan pathogen Toxoplasma gondii. Confers protection to several pathogens, including the bacterial pathogens Listeria monocytogenes and Mycobacterium bovis BCG as well as the protozoan pathogen Toxoplasma gondii. The polypeptide is Guanylate-binding protein 6 (GBP6) (Pongo abelii (Sumatran orangutan)).